Consider the following 474-residue polypeptide: MKKVQDYEFWFVTGSQFLYGEETLRSVEKDAKEIVDKLNESKKLPYPVKFKLVATTAENITEVMKEVNYNDKVAGVITWMHTFSPAKNWIRGTELLQKPLLHLATQFLNHIPYDTIDFDYMNLNQSAHGDREYAFINARLRKNNKIISGYWGDEGIQKQIAKWMDVAVAYNESYGIKVVTFADKMRNVAVTDGDKIEAQIKFGWTVDYWGVADLVEEVNAVSDEDIDKKYEEMKNDYNFVEGQNSSEKFEHNTKYQIREYFGLKKFMDDRGYTAFTTNFEDLAGLEQLPGLAAQMLMAEGYGFAGEGDWKTAALDRLLKIMAHNKQTVFMEDYTLDLREGHEAILGSHMLEVDPSIASDTPRVEVHPLDIGGKEDPARFVFTGMEGDAVDVTMADYGDEFKLMSYDVTGNKTEKETPYLPVAKQLWTPKQGWKQGAEGWLTLGGGHHTVLSFAIDAEQLQDLSNMFGLTYVNIK.

Mn(2+)-binding residues include Glu306, Glu331, His348, and His447.

Belongs to the arabinose isomerase family. It depends on Mn(2+) as a cofactor.

The catalysed reaction is beta-L-arabinopyranose = L-ribulose. It functions in the pathway carbohydrate degradation; L-arabinose degradation via L-ribulose; D-xylulose 5-phosphate from L-arabinose (bacterial route): step 1/3. Its function is as follows. Catalyzes the conversion of L-arabinose to L-ribulose. The chain is L-arabinose isomerase from Pediococcus pentosaceus (strain ATCC 25745 / CCUG 21536 / LMG 10740 / 183-1w).